The primary structure comprises 619 residues: TBC domain-containing protein C1952.17c (619 aa).

The Rab-GAP TBC domain maps to 34–387 (PDEYSLRAKA…RLWDSIIADQ (354 aa)).

The protein resides in the cytoplasm. Functionally, may act as a GTPase-activating protein for Rab family protein(s). This Schizosaccharomyces pombe (strain 972 / ATCC 24843) (Fission yeast) protein is TBC domain-containing protein C1952.17c.